The sequence spans 501 residues: MNRRQVLAALAAIPLLPEAFPANAQAPQKPAAFDPSVVRQIARQLASKPYQAPDTKLPSALADLDYDAYRAIRFNPERALWRGDQLPFQVQFFHRGLFYKNAVTIYEVANGKAQQIRYRSDDFSFGATPAPPPDADLGFAGFRIHAPINKPDYYDEVSVFLGATYFRAVAKGQHYGLSARGLSIDTGQSGGEEFPLFTAFWLERPAPEASSMVVHALLDSKSVAGAYRFTIRPGDTTVFDVEMALYPRADLEHAGLSPMTSMFFFGPNDPSDAADFRPEVHDSDGLAIFNGRGEQLWRPLANPRDLQISAFADLNPRGIGLMQRERQFQAYQDLESRFGLRPSLWAEPIGDWGEGVVQLIEIPTKEEVHDNIAAFWTPKTPLKAKGEHIYTYRLHWGPDTPKPSSLARFSRTGISVRGDHRLFVLDITGDILKSVDAGAVRGVVSADKGEIRNVVTQPNPETGGWRLSFDLTPETPAAELRASLWGGDKALSEVWVYRWTL.

Positions 1-24 are cleaved as a signal peptide; the sequence is MNRRQVLAALAAIPLLPEAFPANA.

It belongs to the OpgD/OpgG family.

The protein localises to the periplasm. Its pathway is glycan metabolism; osmoregulated periplasmic glucan (OPG) biosynthesis. Its function is as follows. Involved in the biosynthesis of osmoregulated periplasmic glucans (OPGs). The chain is Glucans biosynthesis protein G from Rhodopseudomonas palustris (strain BisA53).